Consider the following 1002-residue polypeptide: DNA-directed RNA polymerase 1, mitochondrial (1002 aa).

The transit peptide at 1–21 (MWRYISKQAYSRKFRNSHDSA) directs the protein to the mitochondrion. Catalysis depends on residues Asp703, Lys778, and Asp935.

The protein belongs to the phage and mitochondrial RNA polymerase family. The highest levels of expression are detected in the mature leaves. The level of expression is lowest in the cotyledons.

It is found in the mitochondrion. It catalyses the reaction RNA(n) + a ribonucleoside 5'-triphosphate = RNA(n+1) + diphosphate. In terms of biological role, DNA-dependent RNA polymerase catalyzes the transcription of DNA into RNA using the four ribonucleoside triphosphates as substrates. This chain is DNA-directed RNA polymerase 1, mitochondrial (RPOT1), found in Nicotiana sylvestris (Wood tobacco).